The sequence spans 512 residues: 2-isopropylmalate synthase (512 aa).

Residues 5–268 form the Pyruvate carboxyltransferase domain; sequence LIIFDTTLRD…DVGIDTQHIV (264 aa). The Mn(2+) site is built by aspartate 14, histidine 202, histidine 204, and asparagine 239. Residues 394–512 are regulatory domain; it reads GFVSLAQHSE…SKAERVAAQG (119 aa).

The protein belongs to the alpha-IPM synthase/homocitrate synthase family. LeuA type 1 subfamily. In terms of assembly, homodimer. Mn(2+) serves as cofactor.

The protein localises to the cytoplasm. It carries out the reaction 3-methyl-2-oxobutanoate + acetyl-CoA + H2O = (2S)-2-isopropylmalate + CoA + H(+). It participates in amino-acid biosynthesis; L-leucine biosynthesis; L-leucine from 3-methyl-2-oxobutanoate: step 1/4. Its function is as follows. Catalyzes the condensation of the acetyl group of acetyl-CoA with 3-methyl-2-oxobutanoate (2-ketoisovalerate) to form 3-carboxy-3-hydroxy-4-methylpentanoate (2-isopropylmalate). This chain is 2-isopropylmalate synthase, found in Acidovorax ebreus (strain TPSY) (Diaphorobacter sp. (strain TPSY)).